The sequence spans 193 residues: Penicillin-binding protein activator LpoB (193 aa).

Residues Met-1–Gly-16 form the signal peptide. The N-palmitoyl cysteine moiety is linked to residue Cys-17. The S-diacylglycerol cysteine moiety is linked to residue Cys-17. The interval Cys-17–Lys-55 is disordered. The span at Pro-28–Thr-41 shows a compositional bias: low complexity.

Belongs to the LpoB family. Interacts with PBP1b.

It localises to the cell outer membrane. Regulator of peptidoglycan synthesis that is essential for the function of penicillin-binding protein 1B (PBP1b). The chain is Penicillin-binding protein activator LpoB from Pectobacterium carotovorum subsp. carotovorum (strain PC1).